Reading from the N-terminus, the 424-residue chain is 3-ketoacyl-CoA thiolase B, peroxisomal (424 aa).

The transit peptide at M1 to C26 directs the protein to the peroxisome. The segment at M1 to C26 is PTS2-type peroxisomal targeting signal. The active-site Acyl-thioester intermediate is C123. N6-acetyllysine is present on residues K173 and K234. CoA is bound by residues R249, T252, and S276. Residue C408 is the Proton donor/acceptor of the active site.

Belongs to the thiolase-like superfamily. Thiolase family. Homodimer. Interacts (via PTS2-type peroxisomal targeting signal region) with PEX7; leading to its translocation into peroxisomes.

It is found in the peroxisome. It catalyses the reaction an acyl-CoA + acetyl-CoA = a 3-oxoacyl-CoA + CoA. The catalysed reaction is 2 acetyl-CoA = acetoacetyl-CoA + CoA. It carries out the reaction hexanoyl-CoA + acetyl-CoA = 3-oxooctanoyl-CoA + CoA. The enzyme catalyses tetradecanoyl-CoA + acetyl-CoA = 3-oxohexadecanoyl-CoA + CoA. It catalyses the reaction 3-oxohexadecanedioyl-CoA + CoA = tetradecanedioyl-CoA + acetyl-CoA. The catalysed reaction is 3-oxo-(6Z,9Z,12Z,15Z,18Z,21Z)-tetracosahexaenoyl-CoA + CoA = (4Z,7Z,10Z,13Z,16Z,19Z)-docosahexaenoyl-CoA + acetyl-CoA. It functions in the pathway lipid metabolism; peroxisomal fatty acid beta-oxidation. Functionally, responsible for the thiolytic cleavage of straight chain 3-keto fatty acyl-CoAs (3-oxoacyl-CoAs). Plays an important role in fatty acid peroxisomal beta-oxidation. Catalyzes the cleavage of short, medium, long, and very long straight chain 3-oxoacyl-CoAs. Medium chain straight 3-oxoacyl-CoAs are preferred substrates. This is 3-ketoacyl-CoA thiolase B, peroxisomal from Rattus norvegicus (Rat).